Here is a 2481-residue protein sequence, read N- to C-terminus: Serine/threonine-protein kinase TOR (2481 aa).

Residues M1 to T31 are disordered. 8 HEAT repeats span residues V205 to K242, S292 to D329, H373 to S410, D434 to K471, R569 to Y607, L608 to A645, Q737 to Y775, and K781 to H819. Residues R823 to P847 are disordered. 6 HEAT repeats span residues Y866 to L904, P908 to Q945, P952 to D992, T996 to D1036, E1037 to V1075, and G1077 to E1114. The tract at residues D1179 to Q1204 is disordered. Over residues G1184–T1198 the composition is skewed to basic and acidic residues. One can recognise an FAT domain in the interval L1309–S1887. 2 consecutive short sequence motifs (nuclear localization signal) follow at residues V1505–E1512 and K2075–K2080. In terms of domain architecture, PI3K/PI4K catalytic spans F2065–P2378. A G-loop region spans residues V2071–R2077. The segment at G2244 to N2252 is catalytic loop. The activation loop stretch occupies residues H2264 to T2289. The segment at N2354–T2384 is disordered. Residues V2363 to D2374 are compositionally biased toward acidic residues. A Phosphoserine modification is found at S2424. Residues H2449–W2481 enclose the FATC domain.

It belongs to the PI3/PI4-kinase family. Interacts with RAPTOR1 and itself. Interacts with FKBP12 in a rapamycin-dependent manner. Binds to LST8-1. Hyperactivated upon interaction with cauliflower mosaic virus (CaMV) Tav protein. In terms of processing, activated by phosphorylation on Ser-2424 triggered by cauliflower mosaic virus P6 and auxin. In terms of tissue distribution, highly expressed in root meristems, shoot apical meristem (SAM) and floral buds.

It localises to the cytoplasm. It is found in the nucleus. It carries out the reaction L-seryl-[protein] + ATP = O-phospho-L-seryl-[protein] + ADP + H(+). It catalyses the reaction L-threonyl-[protein] + ATP = O-phospho-L-threonyl-[protein] + ADP + H(+). Almost insensitive to rapamycin. Strongly repressed by specific active site inhibitors (asTORis) such as AZD-8055, TORIN2 and WYE-132, and, to a lesser extent, by KU63794, WYE-354 and TORIN1, leading to impaired photoautotrophic growth and abnormally early meristematic cells differentiation. Repression by TORIN1 leads to impaired responses to auxin, including gravitropism. Combined treatment with rapamycin and active-site inhibitors (e.g. Torin1 and AZD-8055) results in synergistic inhibition of activity and plant growth. Inhibition by KU63794 leads to reduced auxin content in root tips. AZD-8055 treatment reduces abscisic acid (ABA) levels. In addition, inhibition by AZD-8055 leads to a strong reduction of watermelon mosaic virus (WMV) infection. Essential cell growth regulator that controls development from early embryo to seed production. Controls plant growth in environmental stress conditions. Acts through the phosphorylation of downstream effectors that are recruited by the binding partner RAPTOR. Acts by activating transcription, protein synthesis and ribosome biogenesis, and inhibiting mRNA degradation and autophagy. Can phosphorylate TAP46, a regulatory subunit of protein phosphatase 2A that modulates cell growth and survival. Involved in modulating the transition from heterotrophic to photoautotrophic growth by regulating the expression of chloroplast- and photosynthesis-associated genes. Essential for auxin signaling transduction, probably acting in polysomes to maintain the active ATPK1/S6K1 (and thus TIF3H1/eIF3h) phosphorylation status that is critical for translation reinitiation (e.g. uORF-mRNAs loading). Promotes abscisic acid (ABA) biosynthesis. Involved in the regulation of sugar-mediated (e.g. glucose and sucrose) glycolysis- and mitochondrial bioenergetics-dependent root growth promotion. Required for sugar (e.g. glucose) promotion of hypocotyl elongation in the dark, by activating the brassinosteroid pathway and stabilizing BZR1. The regulation of BZR1 degradation is dependent on autophagy. Regulates the expression, phosphorylation and ribosome association of MRFs (e.g. MRF1, MRF3 and MRF4), especially under energy-deficient conditions. Functionally, (Microbial infection) Binding to cauliflower mosaic virus (CaMV) Tav protein is critical for both translation reinitiation and viral fitness. When activated by CaMV P6, promotes CaMV translation by inhibiting cellular autophagy and suppressing both silencing and innate immunity, thus conferring sensitivity to P.syringae. Its function is as follows. (Microbial infection) Required during infection by some potyvirus such as Watermelon mosaic virus (WMV) but not for turnip mosaic virus (TuMV). The sequence is that of Serine/threonine-protein kinase TOR from Arabidopsis thaliana (Mouse-ear cress).